A 403-amino-acid polypeptide reads, in one-letter code: G2/mitotic-specific cyclin-B1 (403 aa).

It belongs to the cyclin family. Cyclin AB subfamily. Interacts with the CDC2 protein kinase to form a serine/threonine kinase holoenzyme complex also known as maturation promoting factor (MPF). The cyclin subunit imparts substrate specificity to the complex.

Essential for the control of the cell cycle at the G2/M (mitosis) transition. This Anguilla japonica (Japanese eel) protein is G2/mitotic-specific cyclin-B1 (ccnb1).